A 345-amino-acid chain; its full sequence is GTPase Obg (345 aa).

The Obg domain occupies 1 to 158; sequence MFIDSVKITL…RLVRLELKLI (158 aa). An OBG-type G domain is found at 159–339; it reads ADVGLVGFPN…LKFMLLEEIK (181 aa). GTP contacts are provided by residues 165–172, 190–194, 212–215, 280–283, and 320–322; these read GFPNVGKS, FTTLT, DIPG, SKSD, and SSL. Residues Ser-172 and Thr-192 each contribute to the Mg(2+) site.

This sequence belongs to the TRAFAC class OBG-HflX-like GTPase superfamily. OBG GTPase family. In terms of assembly, monomer. The cofactor is Mg(2+).

The protein resides in the cytoplasm. Its function is as follows. An essential GTPase which binds GTP, GDP and possibly (p)ppGpp with moderate affinity, with high nucleotide exchange rates and a fairly low GTP hydrolysis rate. Plays a role in control of the cell cycle, stress response, ribosome biogenesis and in those bacteria that undergo differentiation, in morphogenesis control. In Campylobacter jejuni subsp. doylei (strain ATCC BAA-1458 / RM4099 / 269.97), this protein is GTPase Obg.